Reading from the N-terminus, the 118-residue chain is Late cornified envelope protein 1F (118 aa).

The segment covering 1–10 (MSCQQSQQQC) has biased composition (low complexity). Disordered stretches follow at residues 1–23 (MSCQ…CPPK) and 82–118 (RRRS…GGCC). The span at 11–23 (QPPPKCTPKCPPK) shows a compositional bias: pro residues. Over residues 95 to 104 (CCSQPSAGSS) the composition is skewed to low complexity. Positions 105-118 (CCGGGSGQHSGGCC) are enriched in gly residues.

Belongs to the LCE family. Skin-specific. Expression was readily detected in adult trunk skin, adult arm skin, fetal skin, penal skin, vulva, esophagus and tongue. Not expressed in the cervix, rectum, lung, colon, or placenta. Expression is observed in the fibroblasts.

Functionally, precursors of the cornified envelope of the stratum corneum. In Homo sapiens (Human), this protein is Late cornified envelope protein 1F (LCE1F).